Here is a 142-residue protein sequence, read N- to C-terminus: gSG7 salivary protein (142 aa).

A signal peptide spans 1 to 25 (METKLVLALIACGVICLLQTTPTEA). 2 cysteine pairs are disulfide-bonded: Cys-83-Cys-138 and Cys-106-Cys-116.

As to quaternary structure, interacts with host coagulation factor XII (F12) (inactive and activated). Interacts with host high molecular weight kininogen (KNG1) (inactive and activated).

The protein resides in the secreted. With respect to regulation, zn(2+) modulates binding to host coagulation factor XII (F12) and high molecular weight kininogen (KNG1). In terms of biological role, salivary protein with anticoagulant activity. Inhibits activation of host kallikrein-kinin system by preventing the reciprocal activation of coagulation factor XII (F12) and prekallikrein (KLKB1), and subsequent release of bradykinin. Inhibits host factor XII and high molecular weight kininogen (KNG1) binding to negatively charged surfaces. Weakly inhibits the alternative pathway of complement system activation in the host. This chain is gSG7 salivary protein, found in Anopheles stephensi (Indo-Pakistan malaria mosquito).